The chain runs to 266 residues: UPF0246 protein PHZ_c0561 (266 aa).

The tract at residues 245–266 (DEEFTFARPQPPPPAASRNKED) is disordered.

It belongs to the UPF0246 family.

In Phenylobacterium zucineum (strain HLK1), this protein is UPF0246 protein PHZ_c0561.